The chain runs to 99 residues: RNA-binding protein Hfq (99 aa).

The region spanning 9 to 68 is the Sm domain; it reads DPFLNALRRERVPVSIYLVNGIKLQGQIESFDQFVILLKNTVSQMVYKHAISTVVPSRPV. The disordered stretch occupies residues 64 to 99; that stretch reads PSRPVSHHSNNPGGSNNYHGSNTTAQQQSQDADDAE. Positions 70–93 are enriched in low complexity; it reads HHSNNPGGSNNYHGSNTTAQQQSQ.

This sequence belongs to the Hfq family. In terms of assembly, homohexamer.

RNA chaperone that binds small regulatory RNA (sRNAs) and mRNAs to facilitate mRNA translational regulation in response to envelope stress, environmental stress and changes in metabolite concentrations. Also binds with high specificity to tRNAs. The polypeptide is RNA-binding protein Hfq (Pectobacterium atrosepticum (strain SCRI 1043 / ATCC BAA-672) (Erwinia carotovora subsp. atroseptica)).